The sequence spans 417 residues: NADH-quinone oxidoreductase subunit D (417 aa).

This sequence belongs to the complex I 49 kDa subunit family. NDH-1 is composed of 14 different subunits. Subunits NuoB, C, D, E, F, and G constitute the peripheral sector of the complex.

The protein resides in the cell inner membrane. It catalyses the reaction a quinone + NADH + 5 H(+)(in) = a quinol + NAD(+) + 4 H(+)(out). NDH-1 shuttles electrons from NADH, via FMN and iron-sulfur (Fe-S) centers, to quinones in the respiratory chain. The immediate electron acceptor for the enzyme in this species is believed to be ubiquinone. Couples the redox reaction to proton translocation (for every two electrons transferred, four hydrogen ions are translocated across the cytoplasmic membrane), and thus conserves the redox energy in a proton gradient. This chain is NADH-quinone oxidoreductase subunit D, found in Burkholderia ambifaria (strain MC40-6).